Reading from the N-terminus, the 572-residue chain is Squalene synthase (572 aa).

Helical transmembrane passes span 316 to 336 and 492 to 512; these read SVFNFCAIPQVMAIATLELMF and FFLIILVGMVTFMGIVALITW.

It belongs to the phytoene/squalene synthase family. In terms of assembly, monomer. It depends on Mg(2+) as a cofactor.

It is found in the endoplasmic reticulum membrane. It catalyses the reaction 2 (2E,6E)-farnesyl diphosphate + NADPH + H(+) = squalene + 2 diphosphate + NADP(+). The enzyme catalyses 2 (2E,6E)-farnesyl diphosphate + NADH + H(+) = squalene + 2 diphosphate + NAD(+). The protein operates within terpene metabolism; lanosterol biosynthesis; lanosterol from farnesyl diphosphate: step 1/3. Functionally, catalyzes the condensation of 2 two farnesyl pyrophosphate moieties to form squalene. It is the first committed enzyme of the sterol biosynthesis pathway. Required for the biosynthesis of ergosterol. This is Squalene synthase (ERG9) from Mycosarcoma maydis (Corn smut fungus).